A 141-amino-acid chain; its full sequence is ATP synthase epsilon chain (141 aa).

Belongs to the ATPase epsilon chain family. In terms of assembly, F-type ATPases have 2 components, CF(1) - the catalytic core - and CF(0) - the membrane proton channel. CF(1) has five subunits: alpha(3), beta(3), gamma(1), delta(1), epsilon(1). CF(0) has three main subunits: a, b and c.

It localises to the cell inner membrane. Its function is as follows. Produces ATP from ADP in the presence of a proton gradient across the membrane. This Cellvibrio japonicus (strain Ueda107) (Pseudomonas fluorescens subsp. cellulosa) protein is ATP synthase epsilon chain.